Consider the following 513-residue polypeptide: MTILPKKKPPPPPDPEANGERSGSGAPDSHSRSGARPRSSPPPRWAYPGNPSSAAERHTQQVSPPPGSATSGGAGPLGDGALGSCCCCNGAGAGGCCSGPGHSKRRRQVLSAGPGATGNCPDTDDGAGNNSEDEYETAAQTQHLDPDTAEQQELCFEKTLSDKKGFIIKQMKEDGACLFRAVADQVYGDQDMHEVVRKHCMDYLMKNADYFSNYVTEDFTTYINRKRKNNCHGNHIEMQAMAEMYNRPVEVYQYGTEPINTFHGIQKNEDEPIRVSYHRNIHYNSVVNPNKATIGVGLGLPSFKPGYAEQSLMKSAIRTSEESWIEQQMLEDKKRATDWEATNEAIEEQVARESYLQWLRDQEKQARQPRKASATCSSATAAACSGLEEWSGRSPRQRSTAGSPEHPDLHAELCMKPPSPGAPLILGKPPSPCAPGPSNQMSTGADRATSPLVSLYPALECRAIMQHMSPTAFGLKDWDNDEILASVLAASQQEYLDTMKKSTLRRESSPDHS.

Disordered regions lie at residues 1 to 75 and 99 to 136; these read MTIL…GGAG and GPGHSKRRRQVLSAGPGATGNCPDTDDGAGNNSEDEYE. Residues 166 to 289 enclose the OTU domain; sequence FIIKQMKEDG…NIHYNSVVNP (124 aa). A cys-loop region spans residues 171–177; sequence MKEDGAC. Asp-174 is an active-site residue. The active-site Nucleophile is Cys-177. Residues 226 to 236 form a variable-loop region; that stretch reads KRKNNCHGNHI. Positions 277-282 are his-loop; the sequence is YHRNIH. The active site involves His-282. Residues 387-446 form a disordered region; the sequence is LEEWSGRSPRQRSTAGSPEHPDLHAELCMKPPSPGAPLILGKPPSPCAPGPSNQMSTGAD.

Belongs to the peptidase C85 family.

The catalysed reaction is Thiol-dependent hydrolysis of ester, thioester, amide, peptide and isopeptide bonds formed by the C-terminal Gly of ubiquitin (a 76-residue protein attached to proteins as an intracellular targeting signal).. Deubiquitinating enzyme that may function as negative regulator of the innate immune system. Has peptidase activity towards 'Lys-48'- and 'Lys-63'-linked polyubiquitin chains. Can also cleave 'Lys-11'-linked ubiquitin chains (in vitro). This chain is OTU domain-containing protein 5-A (otud5-a), found in Xenopus laevis (African clawed frog).